A 391-amino-acid polypeptide reads, in one-letter code: Probable methanogen homoaconitase large subunit (391 aa).

Residues Cys-275, Cys-333, and Cys-336 each contribute to the [4Fe-4S] cluster site.

Belongs to the aconitase/IPM isomerase family. LeuC type 2 subfamily. Heterotetramer of 2 HacA and 2 HacB proteins.

It carries out the reaction (2R)-homocitrate = (2R,3S)-homoisocitrate. The enzyme catalyses (2R)-homocitrate = cis-homoaconitate + H2O. The catalysed reaction is (2R,3S)-homoisocitrate = cis-homoaconitate + H2O. It catalyses the reaction cis-(homo)2aconitate + H2O = (2R,3S)-iso(homo)2citrate. It carries out the reaction cis-(homo)3aconitate + H2O = (2R,3S)-iso(homo)3citrate. The protein operates within organic acid metabolism; 2-oxosuberate biosynthesis. In terms of biological role, component of a hydro-lyase with broad substrate specificity for cis-unsaturated tricarboxylic acids. Catalyzes both the reversible dehydration of (R)-homocitrate ((R)-2-hydroxybutane-1,2,4-tricarboxylate) to produce cis-homoaconitate ((Z)-but-1-ene-1,2,4-tricarboxylate), and its hydration to homoisocitrate ((1R,2S)-1-hydroxybutane-1,2,4-tricarboxylate). Is also able to hydrate the analogous longer chain substrates cis-homo(2)-aconitate, cis-homo(3)-aconitate. These reactions are part of the biosynthesis pathway of coenzyme B. The polypeptide is Probable methanogen homoaconitase large subunit (hacA) (Methanosarcina mazei (strain ATCC BAA-159 / DSM 3647 / Goe1 / Go1 / JCM 11833 / OCM 88) (Methanosarcina frisia)).